The sequence spans 235 residues: Ribonuclease 3 (235 aa).

In terms of domain architecture, RNase III spans 7-131 (LSALEARIGH…IIGAVFLDGG (125 aa)). Glutamate 45 provides a ligand contact to Mg(2+). Residue aspartate 49 is part of the active site. 2 residues coordinate Mg(2+): aspartate 117 and glutamate 120. Glutamate 120 is an active-site residue. A DRBM domain is found at 156–225 (DPKTTLQEWA…AAAFLTREKI (70 aa)).

Belongs to the ribonuclease III family. In terms of assembly, homodimer. Mg(2+) serves as cofactor.

The protein localises to the cytoplasm. The catalysed reaction is Endonucleolytic cleavage to 5'-phosphomonoester.. Functionally, digests double-stranded RNA. Involved in the processing of primary rRNA transcript to yield the immediate precursors to the large and small rRNAs (23S and 16S). Processes some mRNAs, and tRNAs when they are encoded in the rRNA operon. Processes pre-crRNA and tracrRNA of type II CRISPR loci if present in the organism. This chain is Ribonuclease 3, found in Methylocella silvestris (strain DSM 15510 / CIP 108128 / LMG 27833 / NCIMB 13906 / BL2).